The following is a 189-amino-acid chain: uncharacterized protein (189 aa).

To M.jannaschii MJ1461.

This is an uncharacterized protein from Methanocaldococcus jannaschii (strain ATCC 43067 / DSM 2661 / JAL-1 / JCM 10045 / NBRC 100440) (Methanococcus jannaschii).